Reading from the N-terminus, the 486-residue chain is Glycogen synthase (486 aa).

ADP-alpha-D-glucose is bound at residue lysine 20.

It belongs to the glycosyltransferase 1 family. Bacterial/plant glycogen synthase subfamily.

It catalyses the reaction [(1-&gt;4)-alpha-D-glucosyl](n) + ADP-alpha-D-glucose = [(1-&gt;4)-alpha-D-glucosyl](n+1) + ADP + H(+). It functions in the pathway glycan biosynthesis; glycogen biosynthesis. Functionally, synthesizes alpha-1,4-glucan chains using ADP-glucose. The sequence is that of Glycogen synthase from Aeromonas hydrophila subsp. hydrophila (strain ATCC 7966 / DSM 30187 / BCRC 13018 / CCUG 14551 / JCM 1027 / KCTC 2358 / NCIMB 9240 / NCTC 8049).